The following is a 327-amino-acid chain: Probable cell division protein WhiA (327 aa).

Positions 275–308 form a DNA-binding region, H-T-H motif; the sequence is SLEELGRLADPQMTKDAVAGRIRRLLTTADKRAR.

This sequence belongs to the WhiA family.

Functionally, involved in cell division and chromosome segregation. The polypeptide is Probable cell division protein WhiA (Corynebacterium efficiens (strain DSM 44549 / YS-314 / AJ 12310 / JCM 11189 / NBRC 100395)).